The chain runs to 119 residues: NADH-quinone oxidoreductase subunit A (119 aa).

Transmembrane regions (helical) follow at residues 7–27, 63–83, and 88–108; these read FPVLIFIIFGVVLGIALMSIG, LIAILFILFDLETAFLFPWGV, and IGWPGFIAMGVFLLEFIVGFV.

It belongs to the complex I subunit 3 family. In terms of assembly, NDH-1 is composed of 14 different subunits. Subunits NuoA, H, J, K, L, M, N constitute the membrane sector of the complex.

The protein resides in the cell inner membrane. It catalyses the reaction a quinone + NADH + 5 H(+)(in) = a quinol + NAD(+) + 4 H(+)(out). NDH-1 shuttles electrons from NADH, via FMN and iron-sulfur (Fe-S) centers, to quinones in the respiratory chain. The immediate electron acceptor for the enzyme in this species is believed to be ubiquinone. Couples the redox reaction to proton translocation (for every two electrons transferred, four hydrogen ions are translocated across the cytoplasmic membrane), and thus conserves the redox energy in a proton gradient. The protein is NADH-quinone oxidoreductase subunit A of Cupriavidus pinatubonensis (strain JMP 134 / LMG 1197) (Cupriavidus necator (strain JMP 134)).